A 203-amino-acid polypeptide reads, in one-letter code: SCO2-like protein RT0576 (203 aa).

Residues 42 to 203 (KDNIKIGEAF…KEIMEFLRNE (162 aa)) enclose the Thioredoxin domain. Cu cation contacts are provided by C80, C84, and H170.

It belongs to the SCO1/2 family.

The chain is SCO2-like protein RT0576 from Rickettsia typhi (strain ATCC VR-144 / Wilmington).